The chain runs to 368 residues: Alanine racemase (368 aa).

Catalysis depends on K40, which acts as the Proton acceptor; specific for D-alanine. At K40 the chain carries N6-(pyridoxal phosphate)lysine. R134 contacts substrate. Y263 acts as the Proton acceptor; specific for L-alanine in catalysis. Residue M310 participates in substrate binding.

The protein belongs to the alanine racemase family. It depends on pyridoxal 5'-phosphate as a cofactor.

The enzyme catalyses L-alanine = D-alanine. It participates in amino-acid biosynthesis; D-alanine biosynthesis; D-alanine from L-alanine: step 1/1. Its function is as follows. Catalyzes the interconversion of L-alanine and D-alanine. May also act on other amino acids. In Listeria monocytogenes serovar 1/2a (strain ATCC BAA-679 / EGD-e), this protein is Alanine racemase (alr).